A 536-amino-acid polypeptide reads, in one-letter code: Formate--tetrahydrofolate ligase (536 aa).

51-58 (TPAGEGKT) is an ATP binding site.

Belongs to the formate--tetrahydrofolate ligase family.

The enzyme catalyses (6S)-5,6,7,8-tetrahydrofolate + formate + ATP = (6R)-10-formyltetrahydrofolate + ADP + phosphate. It functions in the pathway one-carbon metabolism; tetrahydrofolate interconversion. The chain is Formate--tetrahydrofolate ligase from Thermoplasma acidophilum (strain ATCC 25905 / DSM 1728 / JCM 9062 / NBRC 15155 / AMRC-C165).